We begin with the raw amino-acid sequence, 101 residues long: Anti-lipopolysaccharide factor (101 aa).

An intrachain disulfide couples cysteine 31 to cysteine 52.

Its function is as follows. Binds tightly to LPS and thus specifically inhibits the LPS-mediated activation of the hemolymph coagulation. It has a strong antibacterial effect especially on the growth of Gram-negative bacteria. This chain is Anti-lipopolysaccharide factor, found in Limulus polyphemus (Atlantic horseshoe crab).